We begin with the raw amino-acid sequence, 666 residues long: Pantothenate kinase 1 (666 aa).

Belongs to the type II pantothenate kinase family.

It carries out the reaction (R)-pantothenate + ATP = (R)-4'-phosphopantothenate + ADP + H(+). It functions in the pathway cofactor biosynthesis; coenzyme A biosynthesis; CoA from (R)-pantothenate: step 1/5. Regulated by feedback inhibition by malonyl-CoA. Functionally, catalyzes the phosphorylation of pantothenate the first step in CoA biosynthesis. May play a role in the physiological regulation of the intracellular CoA concentration. The protein is Pantothenate kinase 1 of Oryza sativa subsp. japonica (Rice).